The primary structure comprises 147 residues: Protein SOB FIVE-LIKE 2 (147 aa).

An SOFL-A motif is present at residues 18–23; that stretch reads SGWTMY. The disordered stretch occupies residues 32–147; that stretch reads HHSEVVYEEE…ASRVKVSKTK (116 aa). The segment covering 37-77 has biased composition (acidic residues); sequence VYEEEDDGFSVKEVDDDGDGDEDDDDDDDDDSSNNESDDSM. Positions 76-85 match the SOFL-B motif; sequence SMTSDASSWP. Residues 78 to 93 are compositionally biased toward polar residues; sequence TSDASSWPSTHQPPRS. Over residues 96-106 the composition is skewed to low complexity; sequence NHAAAKNSNAK. The span at 114–131 shows a compositional bias: basic and acidic residues; the sequence is NRVRDRFSDEGEESELKA.

Belongs to the SOFL plant protein family. Predominantly expressed in the vascular tissues of seedlings, developing leaves, flowers and siliques, but barely detectable in roots and stems.

The protein resides in the cytoplasm. It localises to the nucleus. In terms of biological role, involved in cytokinin-mediated development. Together with SOFL2, triggers the endogenous content of specific bioactive cytokinins derived from the biosynthetic intermediates trans-zeatin riboside monophosphate (tZRMP) and N(6)-(Delta(2)-isopentenyl)adenosine monophosphate (iPRMP) such as N-glucosides trans-zeatin 7-glucoside (tZ7G), cis-zeatin 7-glucoside (cZ7G) and N(6)-(Delta(2)-isopentenyl)adenine 7-glucoside (iP7G). This chain is Protein SOB FIVE-LIKE 2, found in Arabidopsis thaliana (Mouse-ear cress).